Here is a 1395-residue protein sequence, read N- to C-terminus: G2/mitotic-specific cyclin-B3 (1395 aa).

The segment at 1 to 59 is disordered; sequence MLLPLPPQSSKPVPKKSQSSKIVPSHHDPSEKTGENCQTKISPSSLQESPSSLQGALKK. A compositionally biased stretch (low complexity) spans 10-23; the sequence is SKPVPKKSQSSKIV. The span at 25-34 shows a compositional bias: basic and acidic residues; that stretch reads SHHDPSEKTG. Residues 42 to 54 are compositionally biased toward low complexity; that stretch reads SPSSLQESPSSLQ. The D-box signature appears at 60 to 68; the sequence is RSAFEDLTN. 2 disordered regions span residues 418–464 and 1074–1122; these read LSIK…PTEE and ATMT…DSSD. Residues 419–431 show a composition bias toward basic and acidic residues; sequence SIKEKPSTEKESF. Low complexity predominate over residues 1082 to 1093; that stretch reads SRTTTESSACES.

It belongs to the cyclin family. Cyclin AB subfamily. In terms of assembly, interacts with CDK2 kinase. In terms of processing, ubiquitinated. Ubiquitination leads to its degradation during anaphase entry, after degradation of CCNB1. As to expression, testis specific. In testis, it is expressed in developing germ cells, but not in Leydig cells. Weakly or not expressed in other tissues.

The protein resides in the nucleus. Its function is as follows. Cyclins are positive regulatory subunits of the cyclin-dependent kinases (CDKs), and thereby play an essential role in the control of the cell cycle, notably via their destruction during cell division. Its tissue specificity suggest that it may be required during early meiotic prophase I. In Homo sapiens (Human), this protein is G2/mitotic-specific cyclin-B3 (CCNB3).